We begin with the raw amino-acid sequence, 1614 residues long: Low-density lipoprotein receptor-related protein 5 (1614 aa).

The signal sequence occupies residues 1–30; it reads METAPTRAPPPPPPPLLLLVLYCSLVPAAA. The tract at residues 31–287 is beta-propeller 1; the sequence is SPLLLFANRR…YSPMDIQVLS (257 aa). Over 31-1383 the chain is Extracellular; that stretch reads SPLLLFANRR…PPSDDIPAHS (1353 aa). LDL-receptor class B repeat units lie at residues 74–118, 119–161, 162–205, 206–246, and 247–289; these read GAVY…DWVG, KKLY…DPAH, GYMY…DLEE, QKLY…TLSG, and DTLY…LSQE. 2 N-linked (GlcNAc...) asparagine glycosylation sites follow: N92 and N137. Residues 294 to 336 enclose the EGF-like 1 domain; the sequence is FHTPCEEDNGGCSHLCLLSPREPFYSCACPTGVQLQDNGKTCK. Disulfide bonds link C298–C309, C305–C320, and C322–C335. Residues 340–601 are beta-propeller 2; that stretch reads EEVLLLARRT…AVNVAKVVGT (262 aa). LDL-receptor class B repeat units follow at residues 384 to 426, 427 to 469, 470 to 513, 514 to 556, and 557 to 599; these read GYVY…DWVA, RNLY…HPVM, GLMY…DLQE, GKLY…LGDF, and IYWT…AKVV. Residues N445 and N498 are each glycosylated (N-linked (GlcNAc...) asparagine). Residues 600-640 form the EGF-like 2 domain; that stretch reads GTNPCADGNGGCSHLCFFTPRATKCGCPIGLELLSDMKTCI. 3 disulfides stabilise this stretch: C604–C615, C611–C624, and C626–C639. The segment at 643–902 is beta-propeller 3; sequence EAFLVFTSRA…VFHSSRQDGL (260 aa). 5 LDL-receptor class B repeats span residues 686–728, 729–771, 772–814, 815–854, and 855–897; these read NHIY…DWMG, KNLY…DPTK, GYIY…DYAD, QRLY…TQYS, and DYIY…FHSS. The N-linked (GlcNAc...) asparagine glycan is linked to N704. N877 carries N-linked (GlcNAc...) asparagine glycosylation. Positions 901–941 constitute an EGF-like 3 domain; the sequence is GLNDCVHSNGQCGQLCLAIPGGHRCGCASHYTLDPSSRNCS. Cystine bridges form between C905–C916, C912–C925, and C927–C940. A beta-propeller 4 region spans residues 944–1211; the sequence is STFLLFSQKF…AVEEVSLEEF (268 aa). LDL-receptor class B repeat units lie at residues 988-1034, 1035-1077, 1078-1122, 1123-1164, and 1165-1206; these read KFIY…DIYS, RTLF…NAER, GYMY…DNAL, GKLF…VLGR, and HLYW…VEEV. The tract at residues 1002–1025 is disordered; it reads AKDDGTQPSMLTSPSQSLSPDRQP. Residues 1007-1021 show a composition bias toward polar residues; that stretch reads TQPSMLTSPSQSLSP. In terms of domain architecture, EGF-like 4 spans 1212-1253; the sequence is SAHPCARDNGGCSHICIAKGDGTPRCSCPVHLVLLQNLLTCG. Disulfide bonds link C1216-C1227, C1223-C1237, C1239-C1252, C1258-C1272, C1265-C1285, C1279-C1294, C1297-C1309, C1304-C1322, C1316-C1331, C1335-C1347, C1342-C1360, and C1354-C1369. LDL-receptor class A domains lie at 1257–1295, 1296–1332, and 1334–1370; these read TCSP…EGCP, VCSA…ANCD, and VCLP…LMCE. A helical transmembrane segment spans residues 1384–1406; it reads SAIGPVIGIILSLFVMGGVYFVC. At 1407 to 1614 the chain is on the cytoplasmic side; the sequence is QRVMCQRYTG…PPPSPCTDSS (208 aa). The disordered stretch occupies residues 1474 to 1498; the sequence is RNHVTGASSSSSSSTKATLYPPILN. The PPPSP motif A signature appears at 1499-1505; sequence PPPSPAT. The PPPSP motif B signature appears at 1537–1544; sequence PPTTPCST. Positions 1567–1599 are disordered; sequence SDSDPYPPPPTPHSQYLSAEDSCPPSPGTERSY. A PPPSP motif C motif is present at residues 1573 to 1580; the sequence is PPPPTPHS. The PPPSP motif D motif lies at 1590-1595; the sequence is PPSPGT. Positions 1604-1611 match the PPPSP motif E motif; the sequence is PPPPSPCT.

The protein belongs to the LDLR family. As to quaternary structure, homodimer; disulfide-linked. Forms phosphorylated oligomer aggregates on Wnt-signaling. Component of a WNT-signaling complex that contains a WNT protein, a FZD protein and LRP5 or LRP6. Interacts with FZD8; the interaction is formed on WNT-binding and signaling. Interacts (via the phosphorylated PPPSP motif domains) with AXIN1; the interaction prevents inhibition of beta-catenin phosphorylation and signaling and is enhanced in the presence of GSK3B and WNT1 or WNT3A. Interacts (via beta-propeller regions 3 and 4) with DKK1; the interaction, enhanced by MESD and/or KREMEN, inhibits beta-catenin signaling by preventing GSK3-mediated phosphorylation of the PPPSP motifs and subsequent, AXIN1 binding. Interacts with CSNK1E. Interacts with SOST; the interaction antagonizes canonical Wnt signaling. Interacts with APCDD1. Interacts with MESD; the interaction prevents the formation of LRP5 aggregates, targets LRP5 to the plasma membrane and, when complexed with KREMEN2, increases DKK1 binding. Interacts with CAPRIN2. Phosphorylation of cytoplasmic PPPSP motifs regulates the signal transduction of the Wnt signaling pathway through acting as a docking site for AXIN1. Widely expressed, with the highest expression levels in liver, heart, and lung and the lowest levels in brain and spleen.

Its subcellular location is the membrane. It localises to the endoplasmic reticulum. Functionally, acts as a coreceptor with members of the frizzled family of seven-transmembrane spanning receptors to transduce signal by Wnt proteins. Activates the canonical Wnt signaling pathway that controls cell fate determination and self-renewal during embryonic development and adult tissue regeneration. In particular, may play an important role in the development of the posterior patterning of the epiblast during gastrulation. During bone development, regulates osteoblast proliferation and differentiation thus determining bone mass. Mechanistically, the formation of the signaling complex between Wnt ligand, frizzled receptor and LRP5 coreceptor promotes the recruitment of AXIN1 to LRP5, stabilizing beta-catenin/CTNNB1 and activating TCF/LEF-mediated transcriptional programs. Acts as a coreceptor for non-Wnt proteins, such as norrin/NDP. Binding of norrin/NDP to frizzled 4/FZD4-LRP5 receptor complex triggers beta-catenin/CTNNB1-dependent signaling known to be required for retinal vascular development. Plays a role in controlling postnatal vascular regression in retina via macrophage-induced endothelial cell apoptosis. This chain is Low-density lipoprotein receptor-related protein 5, found in Mus musculus (Mouse).